The sequence spans 258 residues: L-fucose dehydrogenase (258 aa).

NADP(+)-binding residues include Ser-17, Ile-19, Arg-39, His-40, Glu-63, Leu-64, and Asn-90. Beta-L-fucose contacts are provided by Asn-94, Ser-140, Lys-141, Gln-147, and Tyr-153. The NADP(+) site is built by Tyr-153 and Lys-157. The active-site Proton acceptor is Tyr-153. Ala-184 and Glu-185 together coordinate beta-L-fucose. NADP(+) is bound by residues Val-186 and Thr-188.

This sequence belongs to the short-chain dehydrogenases/reductases (SDR) family. In terms of assembly, homotetramer; dimer of dimers.

It catalyses the reaction beta-L-fucose + NADP(+) = L-fucono-1,5-lactone + NADPH + H(+). It carries out the reaction D-arabinose + NADP(+) = D-arabinono-1,5-lactone + NADPH + H(+). The protein operates within carbohydrate degradation; L-fucose degradation. In terms of biological role, L-fucose dehydrogenase involved in an L-fucose degradation pathway. Catalyzes the oxidation of L-fucose to L-fucono-1,5-lactone. Can also act on D-arabinose, with lower catalytic efficiency, and has weak activity with L-galactose and 4-deoxy-L-fucose. Shows a preference for NADP(+) over NAD(+). The sequence is that of L-fucose dehydrogenase from Burkholderia multivorans (strain ATCC 17616 / 249).